Reading from the N-terminus, the 1097-residue chain is Apolipoprotein B receptor (1097 aa).

Disordered stretches follow at residues 64-249 (QEDL…KGEE), 262-376 (AWGT…WTTS), 410-739 (EEEG…SRRG), 789-866 (GWDS…ARAE), and 889-1097 (VGWQ…PKPQ). Composition is skewed to basic and acidic residues over residues 83–92 (GPGDDRRHEV), 158–177 (ERQE…RSWE), and 185–208 (VRAR…ETEG). The segment covering 209–218 (KAGAVGPKAA) has biased composition (low complexity). Basic and acidic residues-rich tracts occupy residues 219–232 (GDNR…READ) and 279–302 (GREE…EEAR). The segment covering 312 to 330 (TASGGEEAETASGGEEAGT) has biased composition (low complexity). Positions 331 to 362 (ASGGEEAGIASGGEAGTASGGEEAGTASGGEE) are enriched in gly residues. Ser458 is subject to Phosphoserine. Basic and acidic residues-rich tracts occupy residues 463–487 (VDLR…RMEE) and 496–505 (EERGSSRDPV). Ser510 is subject to Phosphoserine. Phosphothreonine is present on Thr572. At Ser594 the chain carries Phosphoserine. 2 stretches are compositionally biased toward basic and acidic residues: residues 594 to 606 (SKEE…EAGP) and 626 to 637 (NRTRKDMERGNT). Acidic residues predominate over residues 640 to 652 (DAADGEQREEEET). Composition is skewed to basic and acidic residues over residues 791–800 (DSKEKEEAAA), 892–918 (QERE…RLLD), and 928–950 (RRAE…EEQP). A compositionally biased stretch (basic residues) spans 1000-1017 (SRVHLSRSSSQRRSRPSF). Residues 1041-1050 (APEQRPLQLE) are compositionally biased toward low complexity.

As to quaternary structure, homodimer. Post-translationally, there are 2 forms in macrophages, the membrane-binding proteins 200 kDa (MBP 200) and 235 kDa (MBP 235), that can be reduced into a single active ligand-binding species with intermediate mobility (MBP 200R). Expressed in peripheral blood leukocytes &gt; bone marrow = spleen &gt; lymph node, and only faintly visible in appendix and thymus. Expressed in the brain, heart, kidney, liver, lung, pancreas, and placenta. Expressed primarily by reticuloendothelial cells: monocytes, macrophages, and endothelial cells. Expressed in atherosclerotic lesion foam cells.

Its subcellular location is the cell membrane. In terms of biological role, macrophage receptor that binds to the apolipoprotein B48 (APOB) of dietary triglyceride (TG)-rich lipoproteins (TRL) or to a like domain of APOB in hypertriglyceridemic very low density lipoprotein (HTG-VLDL). Binds and internalizes TRL when out of the context of the macrophage. May provide essential lipids to reticuloendothelial cells. Could also be involved in foam cell formation with elevated TRL and remnant lipoprotein (RLP). Mediates the rapid high-affinity uptake of chylomicrons (CM), HTG-VLDL, and trypsinized (tryp) VLDL devoid of APOE in vitro in macrophages. The protein is Apolipoprotein B receptor of Homo sapiens (Human).